A 297-amino-acid chain; its full sequence is MDASMVPRVPHKVGVVGYGRLGQSLVSRLLAQGSELGLELVFVWNRDPGRMAGSVPPALQLEDLTTLEERHPDLVVEVAHPKIIHESGVQILRHANLLVGSPSALADQTTERQLLEASNHWGHTVFVARGALWGCEDISRLDAAGGLQSLRVTMATHPDGFRLEGPLAAAHSSGPRTVLYEGPVRGLCPLAPRNSNTMAAAALAAPSLGFDRVIGVLVADLSLTDMHVVDVELTGPQGPQAAALPCTPTERTQPSLALSLAPLLLQPSGTAYWAAVSFPPDLGSASAEFPPLPLLSP.

A phosphoserine mark is found at Ser24 and Ser172.

Belongs to the L-aspartate dehydrogenase family.

The sequence is that of Aspartate dehydrogenase domain-containing protein from Rattus norvegicus (Rat).